Reading from the N-terminus, the 871-residue chain is Transient receptor potential cation channel subfamily V member 4 (871 aa).

The interval 1–68 is disordered; that stretch reads MADSSEGPRA…GPGDGRPNLR (68 aa). Topologically, residues 1–469 are cytoplasmic; the sequence is MADSSEGPRA…RDKWRKFGAV (469 aa). Tyr-110 bears the Phosphotyrosine mark. ATP-binding positions include Lys-192, Lys-197, Asn-201, 236-239, and Arg-248; that span reads YRGQ. ANK repeat units lie at residues 237–266 and 284–313; these read RGQT…DVHA and FGEL…KKAD. Position 249-251 (249-251) interacts with a 1,2-diacyl-sn-glycero-3-phospho-(1D-myo-inositol-4,5-bisphosphate); sequence RCK. At Tyr-253 the chain carries Phosphotyrosine. A 1,2-diacyl-sn-glycero-3-phospho-(1D-myo-inositol-4,5-bisphosphate)-binding positions include 296 to 299 and Lys-344; that span reads NQPH. Residues 369–398 form an ANK 3 repeat; that stretch reads DGLSPLMMAAKTGKIGIFQHIIRREVTDED. A helical transmembrane segment spans residues 470-490; sequence SFYINVVSYLCAMVIFTLTAY. Over 491 to 507 the chain is Extracellular; the sequence is YQPLEGTPPYPYRTTVD. Residues 508–534 form a helical membrane-spanning segment; the sequence is YLRLAGEVITLFTGVLFFFTNIKDLFM. Residues 535–547 lie on the Cytoplasmic side of the membrane; that stretch reads KKCPGVNSLFIDG. Residues 548–568 form a helical membrane-spanning segment; sequence SFQLLYFIYSVLVIVSAALYL. Residues 569 to 572 lie on the Extracellular side of the membrane; that stretch reads AGIE. The helical transmembrane segment at 573–593 threads the bilayer; sequence AYLAVMVFALVLGWMNALYFT. The Cytoplasmic segment spans residues 594-608; it reads RGLKLTGTYSIMIQK. Residues 609 to 636 form a helical membrane-spanning segment; sequence ILFKDLFRFLLVYLLFMIGYASALVSLL. The Extracellular portion of the chain corresponds to 637-665; that stretch reads NPCANMKVCNEDQTNCTVPTYPSCRDSET. The segment at residues 666-685 is an intramembrane region (pore-forming); it reads FSTFLLDLFKLTIGMGDLEM. The Selectivity filter signature appears at 679 to 682; the sequence is GMGD. Asp-682 is a Ca(2+) binding site. Residues 686 to 693 lie on the Extracellular side of the membrane; that stretch reads LSSTKYPV. Residues 694 to 722 form a helical membrane-spanning segment; that stretch reads VFIILLVTYIILTFVLLLNMLIALMGETV. Over 723–871 the chain is Cytoplasmic; it reads GQVSKESKHI…RKWRTDDAPL (149 aa). Tyr-805 carries the post-translational modification Phosphotyrosine. The tract at residues 812-831 is interaction with calmodulin and ITPR3; sequence HTVGRLRRDRWSSVVPRVVE. Ser-824 bears the Phosphoserine mark. The disordered stretch occupies residues 849–871; it reads GNPRCDGHQQGYPRKWRTDDAPL.

This sequence belongs to the transient receptor (TC 1.A.4) family. TrpV subfamily. TRPV4 sub-subfamily. As to quaternary structure, homotetramer. Self-associates in an isoform-specific manner. Isoform 1 and isoform 5 can oligomerize, but isoform 2, isoform 4 and isoform 6 cannot oligomerize. Interacts with calmodulin. Interacts with Map7 and Src family Tyr protein kinases LYN, SRC, FYN, HCK, LCK and YES. Interacts with CTNNB1. The TRPV4 and CTNNB1 complex can interact with CDH1. Interacts with PACSIN1, PACSIN2 and PACSIN3 (via SH3 domain). Part of a complex containing MLC1, AQP4, HEPACAM and ATP1B1. Interacts with ITPR3. Interacts with AQP5; the interaction is probably indirect and regulates TRPV4 activation by hypotonicity. Interacts with ANO1. Interacts (via C-terminus) with PKD2 (via C-terminus). Interacts with DDX3X; this interaction is decreased when the channel is activated. Post-translationally, N-glycosylated. As to expression, found in the synoviocytes from patients with (RA) and without (CTR) rheumatoid arthritis (at protein level).

It is found in the cell membrane. The protein resides in the apical cell membrane. Its subcellular location is the cell junction. It localises to the adherens junction. The protein localises to the cell projection. It is found in the cilium. The protein resides in the endoplasmic reticulum. It catalyses the reaction Ca(2+)(in) = Ca(2+)(out). Channel activation is inhibited by binding to phosphatidylinositol-4,5-bisphosphate, and to a much lesser degree by phosphatidylinositol-3,4,5-trisphosphate. Not inhibited by phosphatidylinositol-3,4-bisphosphate and phosphatidylinositol-3,5-bisphosphate. Non-selective calcium permeant cation channel involved in osmotic sensitivity and mechanosensitivity. Activation by exposure to hypotonicity within the physiological range exhibits an outward rectification. Also activated by heat, low pH, citrate and phorbol esters. Increase of intracellular Ca(2+) potentiates currents. Channel activity seems to be regulated by a calmodulin-dependent mechanism with a negative feedback mechanism. Promotes cell-cell junction formation in skin keratinocytes and plays an important role in the formation and/or maintenance of functional intercellular barriers. Acts as a regulator of intracellular Ca(2+) in synoviocytes. Plays an obligatory role as a molecular component in the nonselective cation channel activation induced by 4-alpha-phorbol 12,13-didecanoate and hypotonic stimulation in synoviocytes and also regulates production of IL-8. Together with PKD2, forms mechano- and thermosensitive channels in cilium. Negatively regulates expression of PPARGC1A, UCP1, oxidative metabolism and respiration in adipocytes. Regulates expression of chemokines and cytokines related to pro-inflammatory pathway in adipocytes. Together with AQP5, controls regulatory volume decrease in salivary epithelial cells. Required for normal development and maintenance of bone and cartilage. In its inactive state, may sequester DDX3X at the plasma membrane. When activated, the interaction between both proteins is affected and DDX3X relocalizes to the nucleus. In neurons of the central nervous system, could play a role in triggering voluntary water intake in response to increased sodium concentration in body fluid. In terms of biological role, non-selective calcium permeant cation channel involved in osmotic sensitivity and mechanosensitivity. Activation by exposure to hypotonicity within the physiological range exhibits an outward rectification. Also activated by phorbol esters. Has the same channel activity as isoform 1, and is activated by the same stimuli. Its function is as follows. Lacks channel activity, due to impaired oligomerization and intracellular retention. Functionally, (Microbial infection) Facilitates hepatitis C virus (HCV) replication, possibly through its action on DDX3X. (Microbial infection) Facilitates Dengue virus (DENV) replication, possibly through its action on DDX3X. In terms of biological role, (Microbial infection) Facilitates Zika virus (ZIKV) replication, possibly through its action on DDX3X. In Homo sapiens (Human), this protein is Transient receptor potential cation channel subfamily V member 4 (TRPV4).